Consider the following 427-residue polypeptide: Protein TolB homolog (427 aa).

Positions M1–A20 are cleaved as a signal peptide.

This sequence belongs to the TolB family.

It is found in the periplasm. The protein is Protein TolB homolog of Chlamydia caviae (strain ATCC VR-813 / DSM 19441 / 03DC25 / GPIC) (Chlamydophila caviae).